Here is a 189-residue protein sequence, read N- to C-terminus: GTPase NRas (189 aa).

GTP is bound by residues 10–18 (GAGGVGKSA) and 29–30 (VD). The Effector region signature appears at 32–40 (YDPTIEDSY). 57–61 (DTAGQ) serves as a coordination point for GTP. Residue Ser-89 is modified to Phosphoserine. Position 116-119 (116-119 (NKCD)) interacts with GTP. The segment at 166–185 (YRMKKLNSSDDGTQGCMGLP) is hypervariable region. Lys-170 is covalently cross-linked (Glycyl lysine isopeptide (Lys-Gly) (interchain with G-Cter in ubiquitin)). Cys-181 is lipidated: S-palmitoyl cysteine. Cys-186 carries the S-farnesyl cysteine lipid modification. The propeptide at 187-189 (VVM) is removed in mature form.

It belongs to the small GTPase superfamily. Ras family. As to quaternary structure, interacts (active GTP-bound form preferentially) with RGS14. Interacts (active GTP-bound form) with RASSF7. Interacts (active GTP-bound form) with both SHOC2 and PP1c (all isoforms) to form a tertiary complex; SHOC2 and PP1c preferably bind M-Ras/MRAS, but they also bind K-Ras/KRAS, N-Ras/NRAS and H-Ras/HRAS. In terms of processing, palmitoylated by the ZDHHC9-GOLGA7 complex. Depalmitoylated by ABHD17A, ABHD17B and ABHD17C. A continuous cycle of de- and re-palmitoylation regulates rapid exchange between plasma membrane and Golgi. Acetylation at Lys-104 prevents interaction with guanine nucleotide exchange factors (GEFs). Post-translationally, ubiquitinated by the BCR(LZTR1) E3 ubiquitin ligase complex at Lys-170 in a non-degradative manner, leading to inhibit Ras signaling by decreasing Ras association with membranes. In terms of processing, phosphorylation at Ser-89 enhances NRAS association with its downstream effectors.

It is found in the cell membrane. The protein localises to the golgi apparatus membrane. It carries out the reaction GTP + H2O = GDP + phosphate + H(+). Alternates between an inactive form bound to GDP and an active form bound to GTP. Activated by a guanine nucleotide-exchange factor (GEF) and inactivated by a GTPase-activating protein (GAP). Its function is as follows. Ras proteins bind GDP/GTP and possess intrinsic GTPase activity. The chain is GTPase NRas (NRAS) from Pongo abelii (Sumatran orangutan).